We begin with the raw amino-acid sequence, 123 residues long: Large ribosomal subunit protein bL12 (123 aa).

The protein belongs to the bacterial ribosomal protein bL12 family. As to quaternary structure, homodimer. Part of the ribosomal stalk of the 50S ribosomal subunit. Forms a multimeric L10(L12)X complex, where L10 forms an elongated spine to which 2 to 4 L12 dimers bind in a sequential fashion. Binds GTP-bound translation factors.

Forms part of the ribosomal stalk which helps the ribosome interact with GTP-bound translation factors. Is thus essential for accurate translation. The polypeptide is Large ribosomal subunit protein bL12 (Rhodopseudomonas palustris (strain BisB5)).